The sequence spans 95 residues: Small ribosomal subunit protein uS19 (95 aa).

The protein belongs to the universal ribosomal protein uS19 family.

Functionally, protein S19 forms a complex with S13 that binds strongly to the 16S ribosomal RNA. The protein is Small ribosomal subunit protein uS19 of Myxococcus xanthus (strain DK1622).